The primary structure comprises 340 residues: Ketol-acid reductoisomerase (NADP(+)) (340 aa).

The 182-residue stretch at 1–182 (MRVYYDRDCD…GGGRSGIIET (182 aa)) folds into the KARI N-terminal Rossmann domain. Residues 24 to 27 (YGSQ), arginine 48, serine 51, serine 53, and 83 to 86 (DELQ) each bind NADP(+). Histidine 108 is an active-site residue. Glycine 134 contacts NADP(+). The region spanning 183 to 329 (NFRQECETDL…EKLRGMMPWI (147 aa)) is the KARI C-terminal knotted domain. Mg(2+) contacts are provided by aspartate 191, glutamate 195, glutamate 227, and glutamate 231. Serine 252 is a binding site for substrate.

Belongs to the ketol-acid reductoisomerase family. It depends on Mg(2+) as a cofactor.

It carries out the reaction (2R)-2,3-dihydroxy-3-methylbutanoate + NADP(+) = (2S)-2-acetolactate + NADPH + H(+). The catalysed reaction is (2R,3R)-2,3-dihydroxy-3-methylpentanoate + NADP(+) = (S)-2-ethyl-2-hydroxy-3-oxobutanoate + NADPH + H(+). Its pathway is amino-acid biosynthesis; L-isoleucine biosynthesis; L-isoleucine from 2-oxobutanoate: step 2/4. The protein operates within amino-acid biosynthesis; L-valine biosynthesis; L-valine from pyruvate: step 2/4. Involved in the biosynthesis of branched-chain amino acids (BCAA). Catalyzes an alkyl-migration followed by a ketol-acid reduction of (S)-2-acetolactate (S2AL) to yield (R)-2,3-dihydroxy-isovalerate. In the isomerase reaction, S2AL is rearranged via a Mg-dependent methyl migration to produce 3-hydroxy-3-methyl-2-ketobutyrate (HMKB). In the reductase reaction, this 2-ketoacid undergoes a metal-dependent reduction by NADPH to yield (R)-2,3-dihydroxy-isovalerate. The chain is Ketol-acid reductoisomerase (NADP(+)) from Cereibacter sphaeroides (strain ATCC 17029 / ATH 2.4.9) (Rhodobacter sphaeroides).